The chain runs to 92 residues: Small ribosomal subunit protein uS19 (92 aa).

Positions 72–92 (GEFSPTRTYTGHGSDKKSKRG) are disordered.

This sequence belongs to the universal ribosomal protein uS19 family.

In terms of biological role, protein S19 forms a complex with S13 that binds strongly to the 16S ribosomal RNA. This chain is Small ribosomal subunit protein uS19, found in Gluconobacter oxydans (strain 621H) (Gluconobacter suboxydans).